The primary structure comprises 177 residues: Transcription factor E (177 aa).

Residues 9–91 (VEELLNELVG…YWRINYDKAL (83 aa)) enclose the HTH TFE/IIEalpha-type domain.

It belongs to the TFE family. As to quaternary structure, monomer. Interaction with RNA polymerase subunits RpoF and RpoE is necessary for Tfe stimulatory transcription activity. Able to interact with Tbp and RNA polymerase in the absence of DNA promoter. Interacts both with the preinitiation and elongation complexes.

Functionally, transcription factor that plays a role in the activation of archaeal genes transcribed by RNA polymerase. Facilitates transcription initiation by enhancing TATA-box recognition by TATA-box-binding protein (Tbp), and transcription factor B (Tfb) and RNA polymerase recruitment. Not absolutely required for transcription in vitro, but particularly important in cases where Tbp or Tfb function is not optimal. It dynamically alters the nucleic acid-binding properties of RNA polymerases by stabilizing the initiation complex and destabilizing elongation complexes. Seems to translocate with the RNA polymerase following initiation and acts by binding to the non template strand of the transcription bubble in elongation complexes. The chain is Transcription factor E from Archaeoglobus fulgidus (strain ATCC 49558 / DSM 4304 / JCM 9628 / NBRC 100126 / VC-16).